The following is a 350-amino-acid chain: Geranylgeranyl pyrophosphate synthase (350 aa).

Residues Lys-66, Arg-69, and His-98 each contribute to the isopentenyl diphosphate site. The Mg(2+) site is built by Asp-105 and Asp-109. Position 114 (Arg-114) interacts with dimethylallyl diphosphate. Arg-115 provides a ligand contact to isopentenyl diphosphate. Residues Lys-200, Thr-201, Gln-236, Asn-243, and Lys-263 each coordinate dimethylallyl diphosphate.

This sequence belongs to the FPP/GGPP synthase family. Requires Mg(2+) as cofactor.

The catalysed reaction is isopentenyl diphosphate + dimethylallyl diphosphate = (2E)-geranyl diphosphate + diphosphate. The enzyme catalyses isopentenyl diphosphate + (2E)-geranyl diphosphate = (2E,6E)-farnesyl diphosphate + diphosphate. It carries out the reaction isopentenyl diphosphate + (2E,6E)-farnesyl diphosphate = (2E,6E,10E)-geranylgeranyl diphosphate + diphosphate. Its pathway is secondary metabolite biosynthesis; terpenoid biosynthesis. Functionally, geranylgeranyl pyrophosphate synthase; part of the gene cluster that mediates the biosynthesis of pleuromutilin, a tricyclic diterpene showing antibacterial properties. The geranylgeranyl diphosphate (GGPP) synthase ple4 catalyzes the first step in pleuromutilin biosynthesis. GGPP is then substrate of the premutilin synthase (PS) ple3 to yield premutilin. Premutilin synthase is a bifunctional enzyme composed of the fusion of a class II diterpene cyclase (DTC) and a class I diterpene synthase (DTS), with the corresponding domains and active sites containing characteristic aspartate-rich motifs. GGPP is first converted to mutildienyl-diphosphate (MPP) at the class II DTC site. MPP is subsequently further cyclized at the class I DTS site, followed by a 1,5-hydride shift and addition of water prior to terminating deprotonation, to yield premutilin. The cytochrome P450 monooxygenases ple5 and ple6 hydroxylate premutilin at C-11 and C-3, respectively, producing 11-hydroxypremutilin and 3-hydroxypremutilin. The combination of the actions of both ple5 and ple6 leads to the production of 3,11-dihydroxypremutilin. The short chain dehydrogenase ple7 further converts 3,11-dihydroxypremutilin into mutilin. The acetyltransferase ple2 then acetylates mutilin to produce 14-O-acetylmutilin. Finally, the cytochrome P450 monooxygenase ple1 catalyzes hydroxylation on the alpha position of the acetyl side chain of 14-O-acetylmutilin to yield pleuromutilin. The sequence is that of Geranylgeranyl pyrophosphate synthase from Rhodocybe pseudopiperita (Clitopilus pseudopiperitus).